The sequence spans 466 residues: Muscarinic acetylcholine receptor M2 (466 aa).

Over 1 to 22 (MNNSTNSSNSGLALTSPYKTFE) the chain is Extracellular. N-linked (GlcNAc...) asparagine glycosylation is found at asparagine 2, asparagine 3, and asparagine 6. The helical transmembrane segment at 23–45 (VVFIVLVAGSLSLVTIIGNILVM) threads the bilayer. Residues 46 to 59 (VSIKVNRHLQTVNN) are Cytoplasmic-facing. The helical transmembrane segment at 60–80 (YFLFSLACADLIIGVFSMNLY) threads the bilayer. At 81-97 (TLYTVIGYWPLGPVVCD) the chain is on the extracellular side. Cysteine 96 and cysteine 176 are joined by a disulfide. The chain crosses the membrane as a helical span at residues 98 to 119 (LWLALDYVVSNASVMNLLIISF). An Important for signaling motif is present at residues 120-122 (DRY). Topologically, residues 120 to 139 (DRYFCVTKPLTYPVKRTTKM) are cytoplasmic. The chain crosses the membrane as a helical span at residues 140-162 (AGMMIAAAWVLSFILWAPAILFW). Over 163–184 (QFIVGVRTVEDGECYIQFFSNA) the chain is Extracellular. A helical membrane pass occupies residues 185 to 209 (AVTFGTAIAAFYLPVIIMTVLYWHI). Topologically, residues 210–387 (SRASKSRIKK…PPSREKKVTR (178 aa)) are cytoplasmic. The tract at residues 218–320 (KKDKKEPVAN…SLGHSKDENS (103 aa)) is disordered. Residue serine 232 is modified to Phosphoserine. Positions 254–270 (ALEHNKIQNGKAPRDAV) are enriched in basic and acidic residues. Polar residues-rich tracts occupy residues 284–293 (NDSTSVSAVA) and 304–313 (DENTVSTSLG). Residues 388-410 (TILAILLAFIITWAPYNVMVLIN) traverse the membrane as a helical segment. Topologically, residues 411 to 418 (TFCAPCIP) are extracellular. Cysteines 413 and 416 form a disulfide. The chain crosses the membrane as a helical span at residues 419-442 (NTVWTIGYWLCYINSTINPACYAL). The Important for signaling signature appears at 436–440 (NPACY). The Cytoplasmic portion of the chain corresponds to 443 to 466 (CNATFKKTFKHLLMCHYKNIGATR). Threonine 446, threonine 450, and threonine 465 each carry phosphothreonine.

The protein belongs to the G-protein coupled receptor 1 family. Muscarinic acetylcholine receptor subfamily. CHRM2 sub-subfamily. In terms of assembly, interacts with ARRB1 and ARRB2. Interacts with RACK1; the interaction regulates CHRM2 internalization. Post-translationally, phosphorylated in response to agonist treatment.

It localises to the cell membrane. It is found in the postsynaptic cell membrane. The muscarinic acetylcholine receptor mediates various cellular responses, including inhibition of adenylate cyclase, breakdown of phosphoinositides and modulation of potassium channels through the action of G proteins. Primary transducing effect is adenylate cyclase inhibition. The chain is Muscarinic acetylcholine receptor M2 (CHRM2) from Sus scrofa (Pig).